Here is a 208-residue protein sequence, read N- to C-terminus: Small ribosomal subunit protein uS4 (208 aa).

In terms of domain architecture, S4 RNA-binding spans 98 to 161; sequence RRLDNVVYRL…KASPRIKELV (64 aa).

The protein belongs to the universal ribosomal protein uS4 family. In terms of assembly, part of the 30S ribosomal subunit. Contacts protein S5. The interaction surface between S4 and S5 is involved in control of translational fidelity.

In terms of biological role, one of the primary rRNA binding proteins, it binds directly to 16S rRNA where it nucleates assembly of the body of the 30S subunit. With S5 and S12 plays an important role in translational accuracy. This Desulforamulus reducens (strain ATCC BAA-1160 / DSM 100696 / MI-1) (Desulfotomaculum reducens) protein is Small ribosomal subunit protein uS4.